The chain runs to 144 residues: MPKNKGKGGKNRRRGKNENESEKRELVFKEDGQEYAQVIKMLGNGRLEALCFDGVKRLCHIRGKLRKKVWINTSDIILVGLRDYQDNKADVILKYNADEARSLKAYGELPEHAKINETDTFGPGDDDEVQFDDIGDDDEDIDDI.

Over residues 1–15 (MPKNKGKGGKNRRRG) the composition is skewed to basic residues. Positions 1–26 (MPKNKGKGGKNRRRGKNENESEKREL) are disordered. Residues 16–26 (KNENESEKREL) are compositionally biased toward basic and acidic residues. In terms of domain architecture, S1-like spans 22-96 (EKRELVFKED…NKADVILKYN (75 aa)). Lysine 88 participates in a covalent cross-link: Glycyl lysine isopeptide (Lys-Gly) (interchain with G-Cter in ubiquitin). Positions 114-144 (KINETDTFGPGDDDEVQFDDIGDDDEDIDDI) are disordered. The segment covering 124–144 (GDDDEVQFDDIGDDDEDIDDI) has biased composition (acidic residues).

This sequence belongs to the eIF-1A family. In terms of assembly, component of the 43S pre-initiation complex (43S PIC), which is composed of the 40S ribosomal subunit, EIF1, eIF1A (EIF1AX), eIF3 complex, EIF5 and eIF2-GTP-initiator tRNA complex (eIF2 ternary complex). Interacts with EIF5; this interaction contributes to the maintenance of EIF1 within the open 43S PIC. Interacts through its C-terminal domain (CTD) with the CTD of EIF5B; from the location of the start codon by the 43S complex until the formation of the 80S complex. As to expression, ubiquitous.

It localises to the cytoplasm. In terms of biological role, component of the 43S pre-initiation complex (43S PIC), which binds to the mRNA cap-proximal region, scans mRNA 5'-untranslated region, and locates the initiation codon. This protein enhances formation of the cap-proximal complex. Together with EIF1, facilitates scanning, start codon recognition, promotion of the assembly of 48S complex at the initiation codon (43S PIC becomes 48S PIC after the start codon is reached), and dissociation of aberrant complexes. After start codon location, together with EIF5B orients the initiator methionine-tRNA in a conformation that allows 60S ribosomal subunit joining to form the 80S initiation complex. Is released after 80S initiation complex formation, just after GTP hydrolysis by EIF5B, and before release of EIF5B. Its globular part is located in the A site of the 40S ribosomal subunit. Its interaction with EIF5 during scanning contribute to the maintenance of EIF1 within the open 43S PIC. In contrast to yeast orthologs, does not bind EIF1. This Pan troglodytes (Chimpanzee) protein is Eukaryotic translation initiation factor 1A, Y-chromosomal (EIF1AY).